Consider the following 157-residue polypeptide: Endoribonuclease YbeY (157 aa).

Zn(2+)-binding residues include histidine 112, histidine 116, and histidine 122.

This sequence belongs to the endoribonuclease YbeY family. Requires Zn(2+) as cofactor.

It localises to the cytoplasm. In terms of biological role, single strand-specific metallo-endoribonuclease involved in late-stage 70S ribosome quality control and in maturation of the 3' terminus of the 16S rRNA. In Marinobacter nauticus (strain ATCC 700491 / DSM 11845 / VT8) (Marinobacter aquaeolei), this protein is Endoribonuclease YbeY.